The primary structure comprises 122 residues: Large ribosomal subunit protein uL14 (122 aa).

It belongs to the universal ribosomal protein uL14 family. Part of the 50S ribosomal subunit. Forms a cluster with proteins L3 and L19. In the 70S ribosome, L14 and L19 interact and together make contacts with the 16S rRNA in bridges B5 and B8.

Binds to 23S rRNA. Forms part of two intersubunit bridges in the 70S ribosome. The polypeptide is Large ribosomal subunit protein uL14 (Christiangramia forsetii (strain DSM 17595 / CGMCC 1.15422 / KT0803) (Gramella forsetii)).